Reading from the N-terminus, the 7354-residue chain is Microtubule-actin cross-linking factor 1, isoforms 1/2/3/4 (7354 aa).

Positions 1–47 (MSSSDEETLSERSCRSERSCRSERSYRSERSGSLSPCPPGDTLPWNL) are disordered. The interval 1-295 (MSSSDEETLS…VITYVSSIYD (295 aa)) is actin-binding. Serine 4 carries the phosphoserine modification. Residues 9–30 (LSERSCRSERSCRSERSYRSER) are compositionally biased toward basic and acidic residues. The residue at position 35 (serine 35) is a Phosphoserine. A Phosphothreonine modification is found at threonine 42. At serine 57 the chain carries Phosphoserine. Calponin-homology (CH) domains are found at residues 78 to 181 (RVQK…LHFQ) and 194 to 298 (MSAK…DAFP). An LRR 1 repeat occupies 148 to 171 (QRQVKLVNIRNDDITDGNPKLTLG). Serine 280 is subject to Phosphoserine. LRR repeat units lie at residues 377–399 (LYKL…YHPN) and 441–464 (LNCE…LESG). The region spanning 868–925 (KSTLSVKAICDYRQIEITICKNDECVLEDNSQRTKWKVISPTGNEAMVPSVCFLIPPP) is the SH3 domain. The stretch at 1050-1073 (ISELKNIRLLLEECEQRLLKQIQS) is one LRR 5 repeat. At serine 1122 the chain carries Phosphoserine. LRR repeat units follow at residues 1128–1154 (ATTL…VYLN), 1187–1210 (PADL…VKDK), and 1257–1282 (HRVI…DYRA). 2 positions are modified to phosphoserine: serine 1367 and serine 1376. 5 Plectin repeats span residues 1577–1619 (LVLL…QLLG), 1654–1696 (LKVL…ELQS), 1769–1809 (RLLE…CAIL), 1811–1848 (RQLQ…VILE), and 1855–1885 (GLLL…HKIL). Phosphoserine is present on residues serine 2051, serine 2077, and serine 2081. Composition is skewed to basic and acidic residues over residues 2120–2131 (KEEQAETLREEN) and 2145–2155 (SEGKDLSTEKS). Positions 2120 to 2155 (KEEQAETLREENISGDPLLVECPEESEGKDLSTEKS) are disordered. 5 Plectin repeats span residues 2276-2316 (STLS…VKLM), 2352-2393 (NVLM…RILE), 2394-2425 (GQVI…DTAD), 2487-2528 (LLTK…LRKV), and 2671-2715 (LKVL…ASHQ). Disordered regions lie at residues 2806-2841 (AGIR…DSKV), 2951-2978 (EMGG…EVTI), and 3058-3099 (SQET…HISK). Residues 2812–2837 (NGEKAEKGRKISVEMEGQRQDEKASS) are compositionally biased toward basic and acidic residues. Positions 2968–2978 (SEEESDQEVTI) are enriched in acidic residues. Residues serine 3082 and serine 3085 each carry the phosphoserine modification. LRR repeat units lie at residues 3225–3244 (VGQR…LPTR), 3606–3630 (SGKS…IQSH), and 3657–3681 (LTAL…TRVA). Spectrin repeat units follow at residues 3845–3920 (ELQK…NFEE) and 3962–4070 (QYQQ…ALLQ). Phosphoserine is present on serine 3889. The LRR 12 repeat unit spans residues 3898 to 3920 (KGDLRFVTISGQKVLETENNFEE). LRR repeat units lie at residues 4087-4112 (LQSI…VIQE) and 4223-4249 (IQEL…TLGS). The Spectrin 3 repeat unit spans residues 4428–4536 (RMEEVQKEAS…TVARQKQLEE (109 aa)). A phosphoserine mark is found at serine 4458 and serine 4483. 3 LRR repeats span residues 4473-4496 (KAFL…LAGL), 4563-4583 (GVLG…QFML), and 4728-4751 (KKRL…RMNR). One copy of the Spectrin 4 repeat lies at 4759 to 4863 (TQQFQQMFDE…KTANRQSRLK (105 aa)). The residue at position 4921 (serine 4921) is a Phosphoserine. 3 LRR repeats span residues 5010–5035 (NKNL…YLRN), 5131–5153 (NKIQ…MLEE), and 5240–5263 (KDQV…LIQS). 13 Spectrin repeats span residues 5195–5300 (EDFY…QLQE), 5307–5409 (KFQD…QLED), 5414–5506 (AKQF…ADIT), 5631–5735 (RSQQ…ARLE), 5742–5844 (NQFW…ALDE), 5961–6066 (LAEK…KLED), 6071–6175 (AVQY…HKLE), 6181–6284 (LGQF…QQLQ), 6289–6395 (QAQG…KLEE), 6400–6503 (ATEF…RSLD), 6508–6614 (RAKQ…KLEE), 6621–6722 (QFMD…RLEQ), and 6726–6830 (QAEE…QRLE). The residue at position 5394 (threonine 5394) is a Phosphothreonine. LRR repeat units lie at residues 5654 to 5678 (MALG…AFSI) and 5763 to 5787 (AQLP…QLRE). Serine 5988 carries the post-translational modification Phosphoserine. Position 6166 is an N6-acetyllysine (lysine 6166). The stretch at 6452 to 6475 (RDQIIELDQTGNQLKFLSQKQDVV) is one LRR 23 repeat. The tract at residues 6904–6937 (SVEPTHAPFMEKSRSGSRKSLNQPTPPPMPILSQ) is disordered. Serine 6923 carries the post-translational modification Phosphoserine. 2 consecutive EF-hand domains span residues 7001 to 7036 (HKKS…SKFP) and 7037 to 7072 (TTKL…NKDA). Aspartate 7014, aspartate 7016, aspartate 7018, lysine 7020, glutamate 7025, aspartate 7050, aspartate 7052, aspartate 7054, tyrosine 7056, and glutamate 7061 together coordinate Ca(2+). The 79-residue stretch at 7077–7155 (TDADKIEDEV…EFLVKNDPCR (79 aa)) folds into the GAR domain. The segment at 7077-7354 (TDADKIEDEV…ASPRTPGPKR (278 aa)) is C-terminal tail. The disordered stretch occupies residues 7171–7354 (PEGASQGMTP…ASPRTPGPKR (184 aa)). Positions 7191–7225 (SSRAASPTRSSSSASQSNHSCTSMPSSPATPASGT) are enriched in low complexity. Phosphothreonine is present on threonine 7220. The span at 7242 to 7261 (FHSSRTSLAGDTSNSSSPAS) shows a compositional bias: polar residues. Phosphoserine occurs at positions 7245 and 7258. The segment covering 7276–7290 (SRPGSRAGSRAGSRA) has biased composition (low complexity). Residues 7279–7294 (GSRAGSRAGSRASSRR) are 4 X 4 AA tandem repeats of [GS]-S-R-[AR]. Residues serine 7296 and serine 7299 each carry the phosphoserine modification. A compositionally biased stretch (polar residues) spans 7305–7315 (ETQSACSDTSE). Low complexity predominate over residues 7316–7327 (SSAAGGQGSSRR).

Belongs to the plakin or cytolinker family. In terms of assembly, interacts with AXIN1, LRP6 and GOLGA4. Found in a complex composed of MACF1, APC, AXIN1, CTNNB1 and GSK3B. Interacts with MAPRE1, CLASP1 and CLASP2. Interacts with CAMSAP3. In terms of processing, phosphorylated on serine residues in the C-terminal tail by GSK3B. Phosphorylation inhibits microtubule-binding and this plays a critical role in bulge stem cell migration and skin wound repair. Wnt-signaling can repress phosphorylation. Enriched in the hair follicle stem cells (at protein level). Isoform 1 and isoform 2 are ubiquitous expressed, with higher levels seen in lung, heart, thymus, spleen and brain.

Its subcellular location is the cytoplasm. The protein resides in the cytoskeleton. It localises to the golgi apparatus. It is found in the cell membrane. The protein localises to the cell projection. Its subcellular location is the ruffle membrane. Its function is as follows. F-actin-binding protein which plays a role in cross-linking actin to other cytoskeletal proteins and also binds to microtubules. Plays an important role in ERBB2-dependent stabilization of microtubules at the cell cortex. Acts as a positive regulator of Wnt receptor signaling pathway and is involved in the translocation of AXIN1 and its associated complex (composed of APC, CTNNB1 and GSK3B) from the cytoplasm to the cell membrane. Has actin-regulated ATPase activity and is essential for controlling focal adhesions (FAs) assembly and dynamics. Interaction with CAMSAP3 at the minus ends of non-centrosomal microtubules tethers microtubules minus-ends to actin filaments, regulating focal adhesion size and cell migration. May play role in delivery of transport vesicles containing GPI-linked proteins from the trans-Golgi network through its interaction with GOLGA4. Plays a key role in wound healing and epidermal cell migration. Required for efficient upward migration of bulge cells in response to wounding and this function is primarily rooted in its ability to coordinate microtubule dynamics and polarize hair follicle stem cells. As a regulator of actin and microtubule arrangement and stabilization, it plays an essential role in neurite outgrowth, branching and spine formation during brain development. This is Microtubule-actin cross-linking factor 1, isoforms 1/2/3/4 from Mus musculus (Mouse).